Consider the following 417-residue polypeptide: 3-oxoacyl-[acyl-carrier-protein] synthase 2 (417 aa).

The 407-residue stretch at 10–416 (FPYVVVTGIA…GHNVAIAFGR (407 aa)) folds into the Ketosynthase family 3 (KS3) domain. Active-site for beta-ketoacyl synthase activity residues include Cys170, His311, and His346.

This sequence belongs to the thiolase-like superfamily. Beta-ketoacyl-ACP synthases family.

It localises to the cytoplasm. It catalyses the reaction an ultra-long-chain di-unsaturated fatty acyl-[ACP] + malonyl-[ACP] + H(+) = a 3-oxo-ultra-long-chain di-unsaturated fatty acyl-[ACP] + holo-[ACP] + CO2. Its pathway is lipid metabolism; mycolic acid biosynthesis. Its function is as follows. Part of the mycobacterial fatty acid elongation system FAS-II, which is involved in mycolic acid biosynthesis. Catalyzes the elongation of long chain acyl-ACP substrates by the addition of two carbons from malonyl-ACP to an acyl acceptor. Involved in extension of the mycolate chains to full lengths and produces longer chain multiunsaturated hydrocarbons averaging 54 carbons in length. The chain is 3-oxoacyl-[acyl-carrier-protein] synthase 2 (kasB) from Mycobacterium bovis (strain ATCC BAA-935 / AF2122/97).